The primary structure comprises 211 residues: Thiamine-phosphate synthase (211 aa).

4-amino-2-methyl-5-(diphosphooxymethyl)pyrimidine is bound by residues 37–41 and asparagine 69; that span reads QLRIK. Mg(2+) contacts are provided by aspartate 70 and aspartate 89. Serine 108 contacts 4-amino-2-methyl-5-(diphosphooxymethyl)pyrimidine. A 2-[(2R,5Z)-2-carboxy-4-methylthiazol-5(2H)-ylidene]ethyl phosphate-binding site is contributed by 134–136; the sequence is TQT. Lysine 137 is a binding site for 4-amino-2-methyl-5-(diphosphooxymethyl)pyrimidine. 2-[(2R,5Z)-2-carboxy-4-methylthiazol-5(2H)-ylidene]ethyl phosphate is bound by residues glycine 166 and 186 to 187; that span reads VS.

Belongs to the thiamine-phosphate synthase family. The cofactor is Mg(2+).

The catalysed reaction is 2-[(2R,5Z)-2-carboxy-4-methylthiazol-5(2H)-ylidene]ethyl phosphate + 4-amino-2-methyl-5-(diphosphooxymethyl)pyrimidine + 2 H(+) = thiamine phosphate + CO2 + diphosphate. The enzyme catalyses 2-(2-carboxy-4-methylthiazol-5-yl)ethyl phosphate + 4-amino-2-methyl-5-(diphosphooxymethyl)pyrimidine + 2 H(+) = thiamine phosphate + CO2 + diphosphate. It catalyses the reaction 4-methyl-5-(2-phosphooxyethyl)-thiazole + 4-amino-2-methyl-5-(diphosphooxymethyl)pyrimidine + H(+) = thiamine phosphate + diphosphate. It participates in cofactor biosynthesis; thiamine diphosphate biosynthesis; thiamine phosphate from 4-amino-2-methyl-5-diphosphomethylpyrimidine and 4-methyl-5-(2-phosphoethyl)-thiazole: step 1/1. Functionally, condenses 4-methyl-5-(beta-hydroxyethyl)thiazole monophosphate (THZ-P) and 2-methyl-4-amino-5-hydroxymethyl pyrimidine pyrophosphate (HMP-PP) to form thiamine monophosphate (TMP). The chain is Thiamine-phosphate synthase from Salmonella schwarzengrund (strain CVM19633).